Consider the following 219-residue polypeptide: Biofilm-associated metzincin protease inhibitor (219 aa).

Residues 4–24 (TWIYAASAAAIGGALIGGWLL) traverse the membrane as a helical segment. Residues 191–204 (DIAARSDPHGDHVD) show a composition bias toward basic and acidic residues. The interval 191-219 (DIAARSDPHGDHVDAPLAELPPMPPPAQG) is disordered. Positions 209–219 (ELPPMPPPAQG) are enriched in pro residues.

It is found in the cell membrane. Inhibitor of the metalloendopeptidase Mep72. Forms a protein-protein complex with the protease, which is the product of its coregulated adjacent gene, and probably prevents premature protease activity until the protein has been secreted. The protein is Biofilm-associated metzincin protease inhibitor of Pseudomonas aeruginosa (strain ATCC 15692 / DSM 22644 / CIP 104116 / JCM 14847 / LMG 12228 / 1C / PRS 101 / PAO1).